A 293-amino-acid polypeptide reads, in one-letter code: Elongation factor Ts (293 aa).

An involved in Mg(2+) ion dislocation from EF-Tu region spans residues 80-83 (TDFV).

The protein belongs to the EF-Ts family.

Its subcellular location is the cytoplasm. Associates with the EF-Tu.GDP complex and induces the exchange of GDP to GTP. It remains bound to the aminoacyl-tRNA.EF-Tu.GTP complex up to the GTP hydrolysis stage on the ribosome. This chain is Elongation factor Ts, found in Aeromonas hydrophila subsp. hydrophila (strain ATCC 7966 / DSM 30187 / BCRC 13018 / CCUG 14551 / JCM 1027 / KCTC 2358 / NCIMB 9240 / NCTC 8049).